The primary structure comprises 158 residues: Cyclic pyranopterin monophosphate synthase (158 aa).

Substrate-binding positions include 73–75 (LCH) and 110–111 (ME). The active site involves Asp-125.

It belongs to the MoaC family. In terms of assembly, homohexamer; trimer of dimers.

The enzyme catalyses (8S)-3',8-cyclo-7,8-dihydroguanosine 5'-triphosphate = cyclic pyranopterin phosphate + diphosphate. It functions in the pathway cofactor biosynthesis; molybdopterin biosynthesis. In terms of biological role, catalyzes the conversion of (8S)-3',8-cyclo-7,8-dihydroguanosine 5'-triphosphate to cyclic pyranopterin monophosphate (cPMP). This Ectopseudomonas mendocina (strain ymp) (Pseudomonas mendocina) protein is Cyclic pyranopterin monophosphate synthase.